An 831-amino-acid polypeptide reads, in one-letter code: Multiphosphoryl transfer protein (831 aa).

Residues 1–90 (MLTIQFLCPL…EYIQVRFIDS (90 aa)) enclose the HPr domain. The active-site Pros-phosphohistidine intermediate; for HPr activity is the His-15. A Phosphohistidine; by EI modification is found at His-15. The tract at residues 119–650 (GNVLASGVGV…AVKSQLRQLD (532 aa)) is PTS EI. The active-site Tele-phosphohistidine intermediate; for PTS EI activity is the His-298. His-298 carries the phosphohistidine; by autocatalysis modification. Phosphoenolpyruvate-binding residues include Arg-405 and Arg-441. Mg(2+)-binding residues include Glu-540 and Asp-564. Residues 563 to 564 (ND) and Arg-574 each bind phosphoenolpyruvate. The active-site Proton donor; for EI activity is the Cys-611. Positions 685 to 828 (PLLALENIFV…QSILTLLETE (144 aa)) constitute a PTS EIIA type-2 domain. The active-site Tele-phosphohistidine intermediate; for PTS EIIA activity is the His-747. His-747 is modified (phosphohistidine; by HPr).

The protein belongs to the PEP-utilizing enzyme family. Requires Mg(2+) as cofactor.

The protein resides in the cytoplasm. It carries out the reaction L-histidyl-[protein] + phosphoenolpyruvate = N(pros)-phospho-L-histidyl-[protein] + pyruvate. The catalysed reaction is D-fructose(out) + N(pros)-phospho-L-histidyl-[protein] = D-fructose 1-phosphate(in) + L-histidyl-[protein]. Its function is as follows. Multifunctional protein that includes general (non sugar-specific) and sugar-specific components of the phosphoenolpyruvate-dependent sugar phosphotransferase system (sugar PTS). This major carbohydrate active transport system catalyzes the phosphorylation of incoming sugar substrates concomitantly with their translocation across the cell membrane. The enzyme II FryABC PTS system is involved in fructose transport. This Escherichia coli O6:H1 (strain CFT073 / ATCC 700928 / UPEC) protein is Multiphosphoryl transfer protein (fryA).